A 1047-amino-acid chain; its full sequence is UPF0182 protein Mlut_14990 (1047 aa).

Gly residues-rich tracts occupy residues 1–27 (MSFG…GQSG) and 49–59 (GPGGPFGGGGS). The tract at residues 1-66 (MSFGQGGGGP…GGSSAARGRG (66 aa)) is disordered. The next 7 helical transmembrane spans lie at 71 to 91 (PSAL…FVVF), 114 to 134 (VLAK…AVWL), 168 to 188 (LVFL…AMNG), 214 to 234 (FFMA…SVVL), 266 to 286 (AHIG…FWLN), 314 to 334 (AILA…VVSG), and 341 to 361 (IGTA…PFIV). Disordered stretches follow at residues 544–568 (GAPA…TFSG), 941–965 (GDSG…PTAP), and 1007–1047 (EALK…TPSG). Polar residues predominate over residues 555-565 (TADSQEDTAYT). Residues 1015-1037 (ADDALGGDAPAQEQAPAEASPAP) show a composition bias toward low complexity. Residues 1038 to 1047 (SSSPSPTPSG) show a composition bias toward pro residues.

It belongs to the UPF0182 family.

The protein resides in the cell membrane. The polypeptide is UPF0182 protein Mlut_14990 (Micrococcus luteus (strain ATCC 4698 / DSM 20030 / JCM 1464 / CCM 169 / CCUG 5858 / IAM 1056 / NBRC 3333 / NCIMB 9278 / NCTC 2665 / VKM Ac-2230) (Micrococcus lysodeikticus)).